A 266-amino-acid polypeptide reads, in one-letter code: Glucosamine-6-phosphate deaminase (266 aa).

Catalysis depends on Asp-72, which acts as the Proton acceptor; for enolization step. Asp-141 acts as the For ring-opening step in catalysis. Residue His-143 is the Proton acceptor; for ring-opening step of the active site. The active-site For ring-opening step is Glu-148.

Belongs to the glucosamine/galactosamine-6-phosphate isomerase family. NagB subfamily. In terms of assembly, homohexamer.

It catalyses the reaction alpha-D-glucosamine 6-phosphate + H2O = beta-D-fructose 6-phosphate + NH4(+). The protein operates within amino-sugar metabolism; N-acetylneuraminate degradation; D-fructose 6-phosphate from N-acetylneuraminate: step 5/5. Allosterically activated by N-acetylglucosamine 6-phosphate (GlcNAc6P). Its function is as follows. Catalyzes the reversible isomerization-deamination of glucosamine 6-phosphate (GlcN6P) to form fructose 6-phosphate (Fru6P) and ammonium ion. The sequence is that of Glucosamine-6-phosphate deaminase from Edwardsiella ictaluri (strain 93-146).